The primary structure comprises 591 residues: Aspartate--tRNA(Asp/Asn) ligase (591 aa).

Residue E176 participates in L-aspartate binding. Positions 200–203 (QLFK) are aspartate. R222 is an L-aspartate binding site. ATP is bound by residues 222–224 (RDE) and Q231. L-aspartate is bound at residue H450. E484 contributes to the ATP binding site. Position 491 (R491) interacts with L-aspartate. 536–539 (GLDR) lines the ATP pocket.

Belongs to the class-II aminoacyl-tRNA synthetase family. Type 1 subfamily. In terms of assembly, homodimer.

It is found in the cytoplasm. It carries out the reaction tRNA(Asx) + L-aspartate + ATP = L-aspartyl-tRNA(Asx) + AMP + diphosphate. Functionally, aspartyl-tRNA synthetase with relaxed tRNA specificity since it is able to aspartylate not only its cognate tRNA(Asp) but also tRNA(Asn). Reaction proceeds in two steps: L-aspartate is first activated by ATP to form Asp-AMP and then transferred to the acceptor end of tRNA(Asp/Asn). The protein is Aspartate--tRNA(Asp/Asn) ligase of Bacillus anthracis (strain A0248).